Consider the following 410-residue polypeptide: Cytochrome P450 (410 aa).

Residue Cys-359 participates in heme binding.

This sequence belongs to the cytochrome P450 family. Requires heme as cofactor.

This Bacillus subtilis (strain 168) protein is Cytochrome P450 (cypA).